The sequence spans 201 residues: Small ribosomal subunit protein uS4c (201 aa).

Residues 15-44 form a disordered region; sequence LGALPGLTNKRPRAGSDLRNQSRSGKKSQY. One can recognise an S4 RNA-binding domain in the interval 89–150; it reads MRLDNILFRL…EQKSKVLIQN (62 aa).

It belongs to the universal ribosomal protein uS4 family. In terms of assembly, part of the 30S ribosomal subunit. Contacts protein S5. The interaction surface between S4 and S5 is involved in control of translational fidelity.

The protein resides in the plastid. It localises to the chloroplast. Functionally, one of the primary rRNA binding proteins, it binds directly to 16S rRNA where it nucleates assembly of the body of the 30S subunit. In terms of biological role, with S5 and S12 plays an important role in translational accuracy. This Lactuca sativa (Garden lettuce) protein is Small ribosomal subunit protein uS4c (rps4).